Here is a 453-residue protein sequence, read N- to C-terminus: Bifunctional protein GlmU (453 aa).

Positions 1–226 are pyrophosphorylase; it reads MAFSVVILAA…EIEVEGINNR (226 aa). UDP-N-acetyl-alpha-D-glucosamine contacts are provided by residues 8-11, Lys-22, Gln-73, and 78-79; these read LAAG and GT. Residue Asp-102 participates in Mg(2+) binding. Residues Gly-137, Glu-151, Asn-166, and Asn-224 each contribute to the UDP-N-acetyl-alpha-D-glucosamine site. Asn-224 contributes to the Mg(2+) binding site. A linker region spans residues 227–247; it reads KQLAAIERAFQFEQAQELMMQ. The N-acetyltransferase stretch occupies residues 248-453; sequence GVSLLDPHRF…SGWQRPTKPE (206 aa). The UDP-N-acetyl-alpha-D-glucosamine site is built by Arg-330 and Lys-348. His-360 serves as the catalytic Proton acceptor. Residues Tyr-363 and Asn-374 each coordinate UDP-N-acetyl-alpha-D-glucosamine. Acetyl-CoA is bound by residues Ala-377, 383–384, Ser-402, Ala-420, and Arg-437; that span reads NY.

In the N-terminal section; belongs to the N-acetylglucosamine-1-phosphate uridyltransferase family. This sequence in the C-terminal section; belongs to the transferase hexapeptide repeat family. In terms of assembly, homotrimer. Mg(2+) is required as a cofactor.

The protein resides in the cytoplasm. The catalysed reaction is alpha-D-glucosamine 1-phosphate + acetyl-CoA = N-acetyl-alpha-D-glucosamine 1-phosphate + CoA + H(+). The enzyme catalyses N-acetyl-alpha-D-glucosamine 1-phosphate + UTP + H(+) = UDP-N-acetyl-alpha-D-glucosamine + diphosphate. It participates in nucleotide-sugar biosynthesis; UDP-N-acetyl-alpha-D-glucosamine biosynthesis; N-acetyl-alpha-D-glucosamine 1-phosphate from alpha-D-glucosamine 6-phosphate (route II): step 2/2. It functions in the pathway nucleotide-sugar biosynthesis; UDP-N-acetyl-alpha-D-glucosamine biosynthesis; UDP-N-acetyl-alpha-D-glucosamine from N-acetyl-alpha-D-glucosamine 1-phosphate: step 1/1. The protein operates within bacterial outer membrane biogenesis; LPS lipid A biosynthesis. Its function is as follows. Catalyzes the last two sequential reactions in the de novo biosynthetic pathway for UDP-N-acetylglucosamine (UDP-GlcNAc). The C-terminal domain catalyzes the transfer of acetyl group from acetyl coenzyme A to glucosamine-1-phosphate (GlcN-1-P) to produce N-acetylglucosamine-1-phosphate (GlcNAc-1-P), which is converted into UDP-GlcNAc by the transfer of uridine 5-monophosphate (from uridine 5-triphosphate), a reaction catalyzed by the N-terminal domain. In Pseudoalteromonas atlantica (strain T6c / ATCC BAA-1087), this protein is Bifunctional protein GlmU.